The following is a 311-amino-acid chain: Glutaminase (311 aa).

7 residues coordinate substrate: Ser66, Asn116, Glu162, Asn169, Tyr193, Tyr245, and Val263.

This sequence belongs to the glutaminase family. Homotetramer.

The enzyme catalyses L-glutamine + H2O = L-glutamate + NH4(+). The polypeptide is Glutaminase (Rhodopseudomonas palustris (strain ATCC BAA-98 / CGA009)).